We begin with the raw amino-acid sequence, 116 residues long: Large ribosomal subunit protein bL19 (116 aa).

Belongs to the bacterial ribosomal protein bL19 family.

In terms of biological role, this protein is located at the 30S-50S ribosomal subunit interface and may play a role in the structure and function of the aminoacyl-tRNA binding site. The protein is Large ribosomal subunit protein bL19 of Flavobacterium johnsoniae (strain ATCC 17061 / DSM 2064 / JCM 8514 / BCRC 14874 / CCUG 350202 / NBRC 14942 / NCIMB 11054 / UW101) (Cytophaga johnsonae).